We begin with the raw amino-acid sequence, 598 residues long: Insulin-like growth factor 2 mRNA-binding protein 1 (598 aa).

RRM domains follow at residues 2 to 75 (NKLY…HSVP) and 81 to 156 (RKLQ…YIPD). The disordered stretch occupies residues 155 to 195 (PDENSEVDSQRGPDNGRRPGYGPRGTSRQMSPGSGIPSKHQ). Basic and acidic residues predominate over residues 162–171 (DSQRGPDNGR). Serine 185 carries the post-translational modification Phosphoserine. KH domains lie at 198-263 (DIPL…CRMI) and 279-346 (EVPL…EQEI). Position 399 is a phosphotyrosine (tyrosine 399). 2 KH domains span residues 407 to 472 (QETV…QGRI) and 489 to 555 (KLET…QRKI). Positions 561–598 (QVKQQQKGGGMGTPQGPHPQGMTELGSPQGLAQEPRRK) are disordered. 2 positions are modified to phosphothreonine: threonine 573 and threonine 583. Low complexity predominate over residues 574–583 (PQGPHPQGMT). Serine 587 is modified (phosphoserine).

Belongs to the RRM IMP/VICKZ family. In terms of assembly, component of the CRD-mediated complex.

It is found in the nucleus. Its subcellular location is the cytoplasm. The protein localises to the perinuclear region. It localises to the P-body. The protein resides in the stress granule. It is found in the cell projection. Its subcellular location is the growth cone. The protein localises to the filopodium. It localises to the lamellipodium. RNA-binding factor that recruits target transcripts to cytoplasmic protein-RNA complexes (mRNPs). This transcript 'caging' into mRNPs allows mRNA transport and transient storage. It also modulates the rate and location at which target transcripts encounter the translational apparatus and shields them from endonuclease attacks or microRNA-mediated degradation. Preferentially binds to N6-methyladenosine (m6A)-containing mRNAs and increases their stability. Plays a direct role in the transport and translation of transcripts required for axonal regeneration in adult sensory neurons. Regulates localized beta-actin/ACTB mRNA translation in polarized cells, a crucial process for cell migration and neurite outgrowth. Promotes the directed movement of cells by fine-tuning intracellular signaling networks and enhances the velocity of cell migration. This chain is Insulin-like growth factor 2 mRNA-binding protein 1 (igf2bp1), found in Danio rerio (Zebrafish).